A 314-amino-acid chain; its full sequence is Ribosomal RNA small subunit methyltransferase H (314 aa).

Residues 33–35 (GGH), aspartate 52, phenylalanine 84, aspartate 105, and glutamine 112 contribute to the S-adenosyl-L-methionine site.

It belongs to the methyltransferase superfamily. RsmH family.

The protein localises to the cytoplasm. The catalysed reaction is cytidine(1402) in 16S rRNA + S-adenosyl-L-methionine = N(4)-methylcytidine(1402) in 16S rRNA + S-adenosyl-L-homocysteine + H(+). Its function is as follows. Specifically methylates the N4 position of cytidine in position 1402 (C1402) of 16S rRNA. The chain is Ribosomal RNA small subunit methyltransferase H from Lactobacillus delbrueckii subsp. bulgaricus (strain ATCC 11842 / DSM 20081 / BCRC 10696 / JCM 1002 / NBRC 13953 / NCIMB 11778 / NCTC 12712 / WDCM 00102 / Lb 14).